We begin with the raw amino-acid sequence, 616 residues long: Glutamine--fructose-6-phosphate aminotransferase [isomerizing] (616 aa).

The Nucleophile; for GATase activity role is filled by Cys-2. Residues 2-222 (CGIIGYSGPR…QERIVALSGD (221 aa)) form the Glutamine amidotransferase type-2 domain. The disordered stretch occupies residues 70 to 89 (TGIGHTRWATHGEPSDRNAH). SIS domains follow at residues 289-428 (IRDD…LRGF) and 461-606 (LAHW…VDRP). Residue Lys-611 is the For Fru-6P isomerization activity of the active site.

In terms of assembly, homodimer.

Its subcellular location is the cytoplasm. It carries out the reaction D-fructose 6-phosphate + L-glutamine = D-glucosamine 6-phosphate + L-glutamate. Catalyzes the first step in hexosamine metabolism, converting fructose-6P into glucosamine-6P using glutamine as a nitrogen source. The protein is Glutamine--fructose-6-phosphate aminotransferase [isomerizing] of Tropheryma whipplei (strain TW08/27) (Whipple's bacillus).